A 508-amino-acid chain; its full sequence is Photosystem II CP47 reaction center protein (508 aa).

The next 6 membrane-spanning stretches (helical) occupy residues 21-36, 101-115, 140-156, 203-218, 237-252, and 457-472; these read SVHIMHTALVAGWAGS, IVFSGLCFLAAIWHW, GIHLFLSGVACFGFGVF, IAAGTLGILAGLFHLS, VLSSSIAAVFFAAFVV, and SFALLFFFGHIWHGAR.

It belongs to the PsbB/PsbC family. PsbB subfamily. PSII is composed of 1 copy each of membrane proteins PsbA, PsbB, PsbC, PsbD, PsbE, PsbF, PsbH, PsbI, PsbJ, PsbK, PsbL, PsbM, PsbT, PsbX, PsbY, PsbZ, Psb30/Ycf12, at least 3 peripheral proteins of the oxygen-evolving complex and a large number of cofactors. It forms dimeric complexes. Binds multiple chlorophylls. PSII binds additional chlorophylls, carotenoids and specific lipids. is required as a cofactor.

The protein resides in the plastid. Its subcellular location is the chloroplast thylakoid membrane. One of the components of the core complex of photosystem II (PSII). It binds chlorophyll and helps catalyze the primary light-induced photochemical processes of PSII. PSII is a light-driven water:plastoquinone oxidoreductase, using light energy to abstract electrons from H(2)O, generating O(2) and a proton gradient subsequently used for ATP formation. The sequence is that of Photosystem II CP47 reaction center protein from Jasminum nudiflorum (Winter jasmine).